Consider the following 131-residue polypeptide: Fumarate reductase subunit C (131 aa).

The next 3 helical transmembrane spans lie at glutamate 30–leucine 50, phenylalanine 63–histidine 83, and isoleucine 109–leucine 129.

Belongs to the FrdC family. As to quaternary structure, part of an enzyme complex containing four subunits: a flavoprotein (FrdA), an iron-sulfur protein (FrdB), and two hydrophobic anchor proteins (FrdC and FrdD).

It localises to the cell inner membrane. Its function is as follows. Two distinct, membrane-bound, FAD-containing enzymes are responsible for the catalysis of fumarate and succinate interconversion; fumarate reductase is used in anaerobic growth, and succinate dehydrogenase is used in aerobic growth. Anchors the catalytic components of the fumarate reductase complex to the cell inner membrane, binds quinones. The polypeptide is Fumarate reductase subunit C (Shigella dysenteriae serotype 1 (strain Sd197)).